A 155-amino-acid polypeptide reads, in one-letter code: Putative pre-16S rRNA nuclease (155 aa).

The protein belongs to the YqgF nuclease family.

Its subcellular location is the cytoplasm. Its function is as follows. Could be a nuclease involved in processing of the 5'-end of pre-16S rRNA. This is Putative pre-16S rRNA nuclease from Paramagnetospirillum magneticum (strain ATCC 700264 / AMB-1) (Magnetospirillum magneticum).